We begin with the raw amino-acid sequence, 69 residues long: DNA gyrase inhibitor YacG (69 aa).

C7, C10, C26, and C30 together coordinate Zn(2+).

Belongs to the DNA gyrase inhibitor YacG family. In terms of assembly, interacts with GyrB. Zn(2+) serves as cofactor.

Inhibits all the catalytic activities of DNA gyrase by preventing its interaction with DNA. Acts by binding directly to the C-terminal domain of GyrB, which probably disrupts DNA binding by the gyrase. In Shewanella sp. (strain W3-18-1), this protein is DNA gyrase inhibitor YacG.